The chain runs to 113 residues: uncharacterized protein (113 aa).

The HTH cro/C1-type domain maps to 16 to 70; sequence LYEYLEPLDLKINELAELLHVHRNSVSALINNNRKLTTEMAFRLAKVFDTTVDFW. The H-T-H motif DNA-binding region spans 27 to 46; it reads INELAELLHVHRNSVSALIN.

The protein belongs to the VapA/VapI family.

This is an uncharacterized protein from Escherichia coli O6:H1 (strain CFT073 / ATCC 700928 / UPEC).